A 129-amino-acid chain; its full sequence is Fluoride-specific ion channel FluC (129 aa).

4 consecutive transmembrane segments (helical) span residues 10 to 30, 35 to 55, 71 to 91, and 105 to 125; these read LLVG…ALAF, PGFP…IGFL, LFLV…MFEG, and LYLA…IIAA. Glycine 79 and threonine 82 together coordinate Na(+).

This sequence belongs to the fluoride channel Fluc/FEX (TC 1.A.43) family.

It localises to the cell inner membrane. It carries out the reaction fluoride(in) = fluoride(out). Na(+) is not transported, but it plays an essential structural role and its presence is essential for fluoride channel function. In terms of biological role, fluoride-specific ion channel. Important for reducing fluoride concentration in the cell, thus reducing its toxicity. The polypeptide is Fluoride-specific ion channel FluC (Chlorobium luteolum (strain DSM 273 / BCRC 81028 / 2530) (Pelodictyon luteolum)).